A 398-amino-acid polypeptide reads, in one-letter code: G2/mitotic-specific cyclin-B2 (398 aa).

Residue Thr8 is modified to Phosphothreonine. Phosphoserine occurs at positions 11, 77, and 92. Position 94 is a phosphothreonine (Thr94). Ser99, Ser392, and Ser398 each carry phosphoserine.

The protein belongs to the cyclin family. Cyclin AB subfamily. In terms of assembly, interacts with the CDK1 protein kinase to form a serine/threonine kinase holoenzyme complex also known as maturation promoting factor (MPF). The cyclin subunit imparts substrate specificity to the complex.

In terms of biological role, essential for the control of the cell cycle at the G2/M (mitosis) transition. This chain is G2/mitotic-specific cyclin-B2 (CCNB2), found in Homo sapiens (Human).